A 237-amino-acid chain; its full sequence is Uridylate kinase (237 aa).

9–12 (KLSG) serves as a coordination point for ATP. Positions 17 to 22 (GSQGYG) are involved in allosteric activation by GTP. Residue Gly-51 participates in UMP binding. Gly-52 and Arg-56 together coordinate ATP. UMP-binding positions include Asp-71 and 132–139 (CGNPFFTT). ATP-binding residues include Thr-159, Tyr-165, and Asp-168.

It belongs to the UMP kinase family. Homohexamer.

It localises to the cytoplasm. The enzyme catalyses UMP + ATP = UDP + ADP. It functions in the pathway pyrimidine metabolism; CTP biosynthesis via de novo pathway; UDP from UMP (UMPK route): step 1/1. Its activity is regulated as follows. Allosterically activated by GTP. Inhibited by UTP. In terms of biological role, catalyzes the reversible phosphorylation of UMP to UDP. This is Uridylate kinase from Synechococcus sp. (strain CC9605).